The primary structure comprises 154 residues: Aspartate carbamoyltransferase regulatory chain (154 aa).

The Zn(2+) site is built by cysteine 109, cysteine 114, cysteine 138, and cysteine 141.

Belongs to the PyrI family. In terms of assembly, contains catalytic and regulatory chains. It depends on Zn(2+) as a cofactor.

In terms of biological role, involved in allosteric regulation of aspartate carbamoyltransferase. The protein is Aspartate carbamoyltransferase regulatory chain of Aeromonas salmonicida (strain A449).